Here is a 102-residue protein sequence, read N- to C-terminus: Monothiol glutaredoxin-S7 (102 aa).

Residues 1 to 101 (MEKLQKMTSE…PMLKRVGALW (101 aa)) form the Glutaredoxin domain. [2Fe-2S] cluster is bound at residue Cys-21. Positions 99-102 (ALWL) match the Responsive for interaction with TGA factors motif.

The protein belongs to the glutaredoxin family. CC-type subfamily.

The protein localises to the cytoplasm. The protein resides in the nucleus. Functionally, may only reduce GSH-thiol disulfides, but not protein disulfides. This chain is Monothiol glutaredoxin-S7 (GRXS7), found in Arabidopsis thaliana (Mouse-ear cress).